The sequence spans 891 residues: Alanine--tRNA ligase (891 aa).

Residues H564, H568, C678, and H682 each coordinate Zn(2+).

The protein belongs to the class-II aminoacyl-tRNA synthetase family. Zn(2+) is required as a cofactor.

It localises to the cytoplasm. It catalyses the reaction tRNA(Ala) + L-alanine + ATP = L-alanyl-tRNA(Ala) + AMP + diphosphate. Its function is as follows. Catalyzes the attachment of alanine to tRNA(Ala) in a two-step reaction: alanine is first activated by ATP to form Ala-AMP and then transferred to the acceptor end of tRNA(Ala). Also edits incorrectly charged Ser-tRNA(Ala) and Gly-tRNA(Ala) via its editing domain. This Nitrobacter hamburgensis (strain DSM 10229 / NCIMB 13809 / X14) protein is Alanine--tRNA ligase.